A 399-amino-acid chain; its full sequence is Formate-dependent phosphoribosylglycinamide formyltransferase (399 aa).

Residues 8–9 (EL) and glutamate 68 contribute to the N(1)-(5-phospho-beta-D-ribosyl)glycinamide site. Residues arginine 100, lysine 141, 146–151 (SSGHGQ), 185–188 (EALA), and glutamate 193 contribute to the ATP site. The region spanning 105 to 308 (VLAHEELGLP…EFALHARAIL (204 aa)) is the ATP-grasp domain. Mg(2+) contacts are provided by glutamate 266 and glutamate 279. N(1)-(5-phospho-beta-D-ribosyl)glycinamide is bound by residues aspartate 286, lysine 361, and 368-369 (RR).

This sequence belongs to the PurK/PurT family. Homodimer.

The catalysed reaction is N(1)-(5-phospho-beta-D-ribosyl)glycinamide + formate + ATP = N(2)-formyl-N(1)-(5-phospho-beta-D-ribosyl)glycinamide + ADP + phosphate + H(+). It participates in purine metabolism; IMP biosynthesis via de novo pathway; N(2)-formyl-N(1)-(5-phospho-D-ribosyl)glycinamide from N(1)-(5-phospho-D-ribosyl)glycinamide (formate route): step 1/1. Its function is as follows. Involved in the de novo purine biosynthesis. Catalyzes the transfer of formate to 5-phospho-ribosyl-glycinamide (GAR), producing 5-phospho-ribosyl-N-formylglycinamide (FGAR). Formate is provided by PurU via hydrolysis of 10-formyl-tetrahydrofolate. In Bifidobacterium adolescentis (strain ATCC 15703 / DSM 20083 / NCTC 11814 / E194a), this protein is Formate-dependent phosphoribosylglycinamide formyltransferase.